Here is a 135-residue protein sequence, read N- to C-terminus: Transcriptional activator protein (135 aa).

A Nuclear localization signal motif is present at residues lysine 17–arginine 32. A zinc finger lies at cysteine 37 to histidine 54. Polar residues-rich tracts occupy residues leucine 77–alanine 87 and isoleucine 101–phenylalanine 115. The interval leucine 77–arginine 117 is disordered. The transactivation stretch occupies residues asparagine 120–isoleucine 135.

Belongs to the geminiviridae transcriptional activator protein family. As to quaternary structure, monomer. Homodimer. Homooligomer. Self-interaction correlates with nuclear localization and efficient activation of transcription. Monomers suppress local silencing by interacting with and inactivating host adenosine kinase 2 (ADK2) in the cytoplasm. Interacts with and inhibits host SNF1 kinase. Binds to ssDNA. May interact with host RPS27A. Post-translationally, phosphorylated.

The protein resides in the host nucleus. It localises to the host cytoplasm. Functionally, multifunctional protein that modulates host antiviral defenses and promotes host attractiveness to insect vectors. Acts as a suppressor of RNA-mediated gene silencing, also known as post-transcriptional gene silencing (PTGS), a mechanism of plant viral defense that limits the accumulation of viral RNAs. TrAP suppresses the host RNA silencing by inhibiting adenosine kinase 2 (ADK2), a kinase involved in a general methylation pathway. Also suppresses the host basal defense by interacting with and inhibiting SNF1 kinase, a key regulator of cell metabolism implicated in innate antiviral defense. In terms of biological role, inhibits signal transduction by the phytohormone jasmonate, making the infected plant more attractive to aphids, which are the second host to play a role as a dissemination vector. Acts by binding to ubiquitin precursor RPS27A, thereby preventing ubiquitin degradation of JAZ. The sequence is that of Transcriptional activator protein from Tomato yellow leaf curl virus (strain Israel) (TYLCV).